A 96-amino-acid polypeptide reads, in one-letter code: ATP synthase subunit e, mitochondrial (96 aa).

Ser-2 carries the N-acetylserine modification.

This sequence belongs to the ATPase e subunit family. F-type ATPases have 2 components, CF(1) - the catalytic core - and CF(0) - the membrane proton channel. In yeast, the dimeric form of ATP synthase consists of 17 polypeptides: alpha, beta, gamma, delta, epsilon, 4 (B), 5 (OSCP), 6 (A), 8, 9 (C), d, E (Tim11), f, g, h, i/j and k.

The protein resides in the mitochondrion. The protein localises to the mitochondrion inner membrane. Mitochondrial membrane ATP synthase (F(1)F(0) ATP synthase or Complex V) produces ATP from ADP in the presence of a proton gradient across the membrane which is generated by electron transport complexes of the respiratory chain. F-type ATPases consist of two structural domains, F(1) - containing the extramembraneous catalytic core, and F(0) - containing the membrane proton channel, linked together by a central stalk and a peripheral stalk. During catalysis, ATP synthesis in the catalytic domain of F(1) is coupled via a rotary mechanism of the central stalk subunits to proton translocation. Part of the complex F(0) domain. Minor subunit located with subunit a in the membrane. The sequence is that of ATP synthase subunit e, mitochondrial (TIM11) from Saccharomyces cerevisiae (strain ATCC 204508 / S288c) (Baker's yeast).